The sequence spans 338 residues: LINE-1 retrotransposable element ORF1 protein (338 aa).

A disordered region spans residues 1 to 40; sequence MGKKQNRKTGNSKTQSASPPPKERSSSPATEQSWMENDFD. Polar residues-rich tracts occupy residues 8–17 and 26–35; these read KTGNSKTQSA and SSPATEQSWM. Positions 49–153 form a coiled coil; that stretch reads RSNYSELRED…QSLQEIWDYV (105 aa). Residues 157–252 are RNA recognition motif (RRM) domain; the sequence is NLRLIGVPES…KGKPIRLTAD (96 aa). The C-terminal domain (CTD) stretch occupies residues 253–317; sequence LSAETLQARR…TTRPALKELL (65 aa).

The protein belongs to the transposase 22 family. In terms of assembly, homotrimer (via coiled coil domain). May also form larger homooligomers. May interact with DDX39A, HNRNPA1, SERBP1 and YBX1. Interacts with TEX19 and UBR2. Interacts with MOV10. Interacts with APOBEC3D; this interaction inhibits LINE-1 retrotransposition. Polyubiquitinated, probably by UBR2, which induces its degradation.

The protein localises to the nucleus. It localises to the nucleolus. It is found in the cytoplasm. Its subcellular location is the cytoplasmic ribonucleoprotein granule. The protein resides in the stress granule. Its function is as follows. Nucleic acid-binding protein which is essential for retrotransposition of LINE-1 elements in the genome. Functions as a nucleic acid chaperone binding its own transcript and therefore preferentially mobilizing the transcript from which they are encoded. The chain is LINE-1 retrotransposable element ORF1 protein (L1RE1) from Homo sapiens (Human).